The following is a 146-amino-acid chain: Large ribosomal subunit protein uL15 (146 aa).

The span at 1–13 (MKLHELRPAEGSK) shows a compositional bias: basic and acidic residues. Residues 1–54 (MKLHELRPAEGSKKAPKRVGRGNGSGLGKTAGKGHKGQNARSGGGVRPGFEGGQ) are disordered. Gly residues-rich tracts occupy residues 21 to 31 (RGNGSGLGKTA) and 42 to 52 (SGGGVRPGFEG).

Belongs to the universal ribosomal protein uL15 family. In terms of assembly, part of the 50S ribosomal subunit.

Binds to the 23S rRNA. In Clostridium novyi (strain NT), this protein is Large ribosomal subunit protein uL15.